A 20-amino-acid chain; its full sequence is Cytochrome c oxidase subunit 7B-liver, mitochondrial (20 aa).

It belongs to the cytochrome c oxidase VIIb family. Component of the cytochrome c oxidase (complex IV, CIV), a multisubunit enzyme composed of 14 subunits. The complex is composed of a catalytic core of 3 subunits MT-CO1, MT-CO2 and MT-CO3, encoded in the mitochondrial DNA, and 11 supernumerary subunits COX4I, COX5A, COX5B, COX6A, COX6B, COX6C, COX7A, COX7B, COX7C, COX8 and NDUFA4, which are encoded in the nuclear genome. The complex exists as a monomer or a dimer and forms supercomplexes (SCs) in the inner mitochondrial membrane with NADH-ubiquinone oxidoreductase (complex I, CI) and ubiquinol-cytochrome c oxidoreductase (cytochrome b-c1 complex, complex III, CIII), resulting in different assemblies (supercomplex SCI(1)III(2)IV(1) and megacomplex MCI(2)III(2)IV(2)).

The protein localises to the mitochondrion inner membrane. The catalysed reaction is 4 Fe(II)-[cytochrome c] + O2 + 8 H(+)(in) = 4 Fe(III)-[cytochrome c] + 2 H2O + 4 H(+)(out). It participates in energy metabolism; oxidative phosphorylation. In terms of biological role, component of the cytochrome c oxidase, the last enzyme in the mitochondrial electron transport chain which drives oxidative phosphorylation. The respiratory chain contains 3 multisubunit complexes succinate dehydrogenase (complex II, CII), ubiquinol-cytochrome c oxidoreductase (cytochrome b-c1 complex, complex III, CIII) and cytochrome c oxidase (complex IV, CIV), that cooperate to transfer electrons derived from NADH and succinate to molecular oxygen, creating an electrochemical gradient over the inner membrane that drives transmembrane transport and the ATP synthase. Cytochrome c oxidase is the component of the respiratory chain that catalyzes the reduction of oxygen to water. Electrons originating from reduced cytochrome c in the intermembrane space (IMS) are transferred via the dinuclear copper A center (CU(A)) of subunit 2 and heme A of subunit 1 to the active site in subunit 1, a binuclear center (BNC) formed by heme A3 and copper B (CU(B)). The BNC reduces molecular oxygen to 2 water molecules using 4 electrons from cytochrome c in the IMS and 4 protons from the mitochondrial matrix. The chain is Cytochrome c oxidase subunit 7B-liver, mitochondrial from Thunnus obesus (Bigeye tuna).